The primary structure comprises 370 residues: D-alanine--D-alanine ligase (370 aa).

Positions 142–348 constitute an ATP-grasp domain; it reads KQILTHHHIQ…YTALIDQLIQ (207 aa). ATP is bound at residue 172–227; that stretch reads QAHVGDHLFIKPANQGSSIGIHKAENEQEYLDGLADAFKYDYKILVEESIDNPREV. Mg(2+)-binding residues include Asp302, Glu315, and Asn317.

Belongs to the D-alanine--D-alanine ligase family. The cofactor is Mg(2+). Mn(2+) is required as a cofactor.

Its subcellular location is the cytoplasm. It catalyses the reaction 2 D-alanine + ATP = D-alanyl-D-alanine + ADP + phosphate + H(+). It participates in cell wall biogenesis; peptidoglycan biosynthesis. In terms of biological role, cell wall formation. This is D-alanine--D-alanine ligase from Lactiplantibacillus plantarum (strain ATCC BAA-793 / NCIMB 8826 / WCFS1) (Lactobacillus plantarum).